A 393-amino-acid polypeptide reads, in one-letter code: MAKLTTNTFFNTKNIVAFSFFLVFLIVISVIVTIFFLGVSVDDVKTIITAINYQNWGWIFVVILGFLVSVLWNVIINWWVSRRFCFYASWWEWLLFGFVVQFFQIVTPLSLGQDPFRLYWFIKKGMKKQTAVLIVTSTGAFWNLSQALITWPSFFVLSKNYQLLANNHNSFVSYWLSLTGMIFDVVVAILFIVIAFNKKMHVLIYSLVNQFRKWLKRPYLTKEQIYQRFIEKAEFNKLYGIEMRRWGLTIFKLLANMVVAIVSYFSLFGVFMITKTVNTTNNVIDQYSLIDLFNITNIAVTASNFIPVASGEGATQFVMTSFLNAFKPTDQFLHDQIKDGVFLWRLLSVYLPAIFTGICFVVWIVQVIWEFKKTVNVPLKTVNTVSLETKKDK.

A run of 8 helical transmembrane segments spans residues 15-35 (IVAFSFFLVFLIVISVIVTIF), 56-76 (WGWIFVVILGFLVSVLWNVII), 86-106 (FYASWWEWLLFGFVVQFFQIV), 131-151 (AVLIVTSTGAFWNLSQALITW), 176-196 (LSLTGMIFDVVVAILFIVIAF), 253-273 (LLANMVVAIVSYFSLFGVFMI), 289-309 (LIDLFNITNIAVTASNFIPVA), and 349-369 (VYLPAIFTGICFVVWIVQVIW).

The protein localises to the cell membrane. This is an uncharacterized protein from Mycoplasma genitalium (strain ATCC 33530 / DSM 19775 / NCTC 10195 / G37) (Mycoplasmoides genitalium).